Consider the following 449-residue polypeptide: Signal recognition particle protein (449 aa).

GTP is bound by residues 109–116 (GLQGSGKT), 191–195 (DTAGR), and 249–252 (SRID).

Belongs to the GTP-binding SRP family. SRP54 subfamily. Part of the signal recognition particle protein translocation system, which is composed of SRP and FtsY. SRP is a ribonucleoprotein composed of Ffh and a 4.5S RNA molecule.

It is found in the cytoplasm. It catalyses the reaction GTP + H2O = GDP + phosphate + H(+). Functionally, involved in targeting and insertion of nascent membrane proteins into the cytoplasmic membrane. Binds to the hydrophobic signal sequence of the ribosome-nascent chain (RNC) as it emerges from the ribosomes. The SRP-RNC complex is then targeted to the cytoplasmic membrane where it interacts with the SRP receptor FtsY. Interaction with FtsY leads to the transfer of the RNC complex to the Sec translocase for insertion into the membrane, the hydrolysis of GTP by both Ffh and FtsY, and the dissociation of the SRP-FtsY complex into the individual components. This Rickettsia felis (strain ATCC VR-1525 / URRWXCal2) (Rickettsia azadi) protein is Signal recognition particle protein.